A 286-amino-acid polypeptide reads, in one-letter code: Protease HtpX homolog (286 aa).

Helical transmembrane passes span 7-27 and 29-49; these read TFMLMAAITALFIVIGGMIGG and SGMMLALLFALGMNFFSYWFS. Zn(2+) is bound at residue His-131. The active site involves Glu-132. A Zn(2+)-binding site is contributed by His-135. 2 helical membrane-spanning segments follow: residues 146–166 and 177–197; these read LSATMAGAISALANFAVFFGG and IAGIAVAILAPLAASLIQMAI. A Zn(2+)-binding site is contributed by Glu-202.

The protein belongs to the peptidase M48B family. It depends on Zn(2+) as a cofactor.

It is found in the cell inner membrane. In Ralstonia nicotianae (strain ATCC BAA-1114 / GMI1000) (Ralstonia solanacearum), this protein is Protease HtpX homolog.